The primary structure comprises 495 residues: Cobyric acid synthase (495 aa).

The region spanning 262–445 is the GATase cobBQ-type domain; that stretch reads CLEIAVIRLP…LHGLFDNHRW (184 aa). The active-site Nucleophile is the C340. H437 is a catalytic residue.

The protein belongs to the CobB/CobQ family. CobQ subfamily.

The protein operates within cofactor biosynthesis; adenosylcobalamin biosynthesis. In terms of biological role, catalyzes amidations at positions B, D, E, and G on adenosylcobyrinic A,C-diamide. NH(2) groups are provided by glutamine, and one molecule of ATP is hydrogenolyzed for each amidation. This is Cobyric acid synthase from Synechococcus sp. (strain JA-3-3Ab) (Cyanobacteria bacterium Yellowstone A-Prime).